Here is a 363-residue protein sequence, read N- to C-terminus: Trans-2,3-enoyl-CoA reductase-like (363 aa).

Ser-37 is subject to Phosphoserine. The next 4 helical transmembrane spans lie at 143-163 (WTTV…LFYL), 216-235 (NLLK…AYYI), 250-270 (VAIS…INVV), and 311-331 (ISFT…LMSI).

This sequence belongs to the steroid 5-alpha reductase family.

The protein localises to the membrane. Its subcellular location is the endoplasmic reticulum. The chain is Trans-2,3-enoyl-CoA reductase-like (TECRL) from Bos taurus (Bovine).